The following is a 494-amino-acid chain: Alpha-amylase-related protein (494 aa).

The N-terminal stretch at 1–20 is a signal peptide; sequence MFKFALALTLCLAGASLSLA. Position 21 is a pyrrolidone carboxylic acid (Gln21). Residues Cys48 and Cys104 are joined by a disulfide bond. Residues Asn118, Gln169, and Asp178 each contribute to the Ca(2+) site. Residues Cys157 and Cys171 are joined by a disulfide bond. Arg206 provides a ligand contact to chloride. Residue Asp208 is the Nucleophile of the active site. His212 contributes to the Ca(2+) binding site. Glu245 (proton donor) is an active-site residue. Positions 308 and 343 each coordinate chloride. 3 disulfides stabilise this stretch: Cys376–Cys382, Cys418–Cys441, and Cys448–Cys460.

The protein belongs to the glycosyl hydrolase 13 family. Monomer. Requires Ca(2+) as cofactor. It depends on chloride as a cofactor.

It localises to the secreted. It carries out the reaction Endohydrolysis of (1-&gt;4)-alpha-D-glucosidic linkages in polysaccharides containing three or more (1-&gt;4)-alpha-linked D-glucose units.. The sequence is that of Alpha-amylase-related protein (Amyrel) from Drosophila punjabiensis (Fruit fly).